The primary structure comprises 264 residues: S-adenosylmethionine decarboxylase proenzyme (264 aa).

Ser-113 functions as the Schiff-base intermediate with substrate; via pyruvic acid in the catalytic mechanism. Ser-113 carries the pyruvic acid (Ser); by autocatalysis modification. Residue His-118 is the Proton acceptor; for processing activity of the active site. Cys-141 (proton donor; for catalytic activity) is an active-site residue.

The protein belongs to the prokaryotic AdoMetDC family. Type 2 subfamily. In terms of assembly, heterooctamer of four alpha and four beta chains arranged as a tetramer of alpha/beta heterodimers. Pyruvate is required as a cofactor. In terms of processing, is synthesized initially as an inactive proenzyme. Formation of the active enzyme involves a self-maturation process in which the active site pyruvoyl group is generated from an internal serine residue via an autocatalytic post-translational modification. Two non-identical subunits are generated from the proenzyme in this reaction, and the pyruvate is formed at the N-terminus of the alpha chain, which is derived from the carboxyl end of the proenzyme. The post-translation cleavage follows an unusual pathway, termed non-hydrolytic serinolysis, in which the side chain hydroxyl group of the serine supplies its oxygen atom to form the C-terminus of the beta chain, while the remainder of the serine residue undergoes an oxidative deamination to produce ammonia and the pyruvoyl group blocking the N-terminus of the alpha chain.

The catalysed reaction is S-adenosyl-L-methionine + H(+) = S-adenosyl 3-(methylsulfanyl)propylamine + CO2. The protein operates within amine and polyamine biosynthesis; S-adenosylmethioninamine biosynthesis; S-adenosylmethioninamine from S-adenosyl-L-methionine: step 1/1. Catalyzes the decarboxylation of S-adenosylmethionine to S-adenosylmethioninamine (dcAdoMet), the propylamine donor required for the synthesis of the polyamines spermine and spermidine from the diamine putrescine. In Hahella chejuensis (strain KCTC 2396), this protein is S-adenosylmethionine decarboxylase proenzyme.